The sequence spans 642 residues: MRKVMLAEKAGFCFGVKRAVDMALLTQKEYNKKIYTLGELIHNNDVVDKLKDNNVYPIGIEDIDNLKENDVILIRSHGISEEIYKILLSKGLTVINATCPFVTKIQEKVKKYNELGYDIVIVGDKYHPEVIGINGWCDNKAIISKQGENLENITSESKVCIVSQTTEKLENWEKVLKEVKNRAIEVISFNTICNATSERQKIAKDLSNKVDFMVVIGGKQSSNTTKLYEICKSNCNETIHVENSGEIPENILKNKNCVIGVTAGASTPDWIIEEAISKMSENQISNETNNEMADAMKFIAENEGKIYVGASVTGEIIQVSEKEVFLNINYKRDGVIPKSEIDDDGKDLKELFTVGDKIVAKIIKLKDADNYVVLSVKELQREQGYKEIKEAFENKTTLNVVVKEDVKGGIIASYKGIRIFIPASHVELFHVDNLKEYIGKSFDVAIIEYSTKKRQTKIVASRRALLSKEKEKVEETVWNKLEEGQVVEGEVKRLTDFGAFVEIEGVDGLLHVSEISWGRVEKPADVLKIGDKIKVYVLSVDKENKKLSLSVKKLTENPWNNVEEKYPVGSVVLGKVIRFADFGAFVKLEPGVDGLVHISEISHKRIAKPSDALNVGEEIKAKILEVSSEEKKIGLSIREVEE.

Positions 1 to 282 (MRKVMLAEKA…EEAISKMSEN (282 aa)) are 4-hydroxy-3-methylbut-2-enyl diphosphate reductase. Position 13 (C13) interacts with [4Fe-4S] cluster. Positions 42 and 77 each coordinate (2E)-4-hydroxy-3-methylbut-2-enyl diphosphate. Dimethylallyl diphosphate-binding residues include H42 and H77. The isopentenyl diphosphate site is built by H42 and H77. Residue C99 participates in [4Fe-4S] cluster binding. A (2E)-4-hydroxy-3-methylbut-2-enyl diphosphate-binding site is contributed by H127. H127 provides a ligand contact to dimethylallyl diphosphate. Position 127 (H127) interacts with isopentenyl diphosphate. E129 (proton donor) is an active-site residue. T165 is a binding site for (2E)-4-hydroxy-3-methylbut-2-enyl diphosphate. C193 is a binding site for [4Fe-4S] cluster. Positions 221, 222, 223, and 266 each coordinate (2E)-4-hydroxy-3-methylbut-2-enyl diphosphate. Dimethylallyl diphosphate is bound by residues S221, S222, N223, and S266. Residues S221, S222, N223, and S266 each contribute to the isopentenyl diphosphate site. 3 S1 motif domains span residues 309 to 377 (GASV…LSVK), 484 to 552 (GQVV…LSVK), and 569 to 638 (GSVV…LSIR).

It in the N-terminal section; belongs to the IspH family. Requires [4Fe-4S] cluster as cofactor.

It carries out the reaction isopentenyl diphosphate + 2 oxidized [2Fe-2S]-[ferredoxin] + H2O = (2E)-4-hydroxy-3-methylbut-2-enyl diphosphate + 2 reduced [2Fe-2S]-[ferredoxin] + 2 H(+). It catalyses the reaction dimethylallyl diphosphate + 2 oxidized [2Fe-2S]-[ferredoxin] + H2O = (2E)-4-hydroxy-3-methylbut-2-enyl diphosphate + 2 reduced [2Fe-2S]-[ferredoxin] + 2 H(+). The protein operates within isoprenoid biosynthesis; dimethylallyl diphosphate biosynthesis; dimethylallyl diphosphate from (2E)-4-hydroxy-3-methylbutenyl diphosphate: step 1/1. It participates in isoprenoid biosynthesis; isopentenyl diphosphate biosynthesis via DXP pathway; isopentenyl diphosphate from 1-deoxy-D-xylulose 5-phosphate: step 6/6. Catalyzes the conversion of 1-hydroxy-2-methyl-2-(E)-butenyl 4-diphosphate (HMBPP) into a mixture of isopentenyl diphosphate (IPP) and dimethylallyl diphosphate (DMAPP). Acts in the terminal step of the DOXP/MEP pathway for isoprenoid precursor biosynthesis. The protein is 4-hydroxy-3-methylbut-2-enyl diphosphate reductase of Clostridium acetobutylicum (strain ATCC 824 / DSM 792 / JCM 1419 / IAM 19013 / LMG 5710 / NBRC 13948 / NRRL B-527 / VKM B-1787 / 2291 / W).